We begin with the raw amino-acid sequence, 67 residues long: Small ribosomal subunit protein eS17 (67 aa).

This sequence belongs to the eukaryotic ribosomal protein eS17 family. In terms of assembly, part of the 30S ribosomal subunit.

The chain is Small ribosomal subunit protein eS17 from Thermococcus kodakarensis (strain ATCC BAA-918 / JCM 12380 / KOD1) (Pyrococcus kodakaraensis (strain KOD1)).